The chain runs to 353 residues: Putative protein SPATA31J1 (353 aa).

A helical transmembrane segment spans residues 34–54 (IPQIIHFVLFVVFSLVILIIL). A disordered region spans residues 122-271 (EGSSHHLPRQ…NPGWVSWSDS (150 aa)). Residues 182–195 (SVESLGSPSSLSSS) show a composition bias toward low complexity. The span at 211 to 221 (PPASTLSPNPT) shows a compositional bias: polar residues. Residues 222–237 (SSTESLGYLSSLSSSQ) are compositionally biased toward low complexity. A compositionally biased stretch (basic residues) spans 244 to 262 (PLKHPSHKPRGRSLPRRRN).

Belongs to the SPATA31 family.

It localises to the membrane. This chain is Putative protein SPATA31J1, found in Homo sapiens (Human).